The primary structure comprises 1744 residues: Tensin-1 (1744 aa).

A disordered region spans residues 15-55 (SPAVNYELPSPGQSITKQVDTPDATRSPRGGQAHRKASRSM). A Phosphatase tensin-type domain is found at 58–230 (TAAMESSCEL…HYFSGLLSGS (173 aa)). In terms of domain architecture, C2 tensin-type spans 235–361 (NKPLFLHHVI…GKVEFVFSYG (127 aa)). Disordered regions lie at residues 467-505 (TLSVSSDSGNSTASTKTDRTDEPGAPGAPTGHAVLSPEE), 569-589 (DELPNQDGHSVGSLGTLSSLD), 666-686 (AQEHLAGYPQRQPASTSPAWL), 724-797 (PQAP…APSR), 934-956 (GSQQLLVSSPPSPTAPAQSQLPH), 982-1077 (RVAG…PGLA), and 1156-1437 (VPSP…GSAV). Positions 468–481 (LSVSSDSGNSTAST) are enriched in polar residues. The span at 580–589 (GSLGTLSSLD) shows a compositional bias: low complexity. The span at 728 to 753 (ARSTSSREAVQRGLNSWQQQGGSRPP) shows a compositional bias: polar residues. The span at 763 to 773 (SHSPSLSSCSP) shows a compositional bias: low complexity. The span at 774–783 (QPSPLQPMPP) shows a compositional bias: pro residues. Basic and acidic residues-rich tracts occupy residues 1004 to 1014 (TPSDSHYEKSS) and 1041 to 1054 (RPKEPHLHSYKEAF). Residues 1060 to 1069 (ASPSSLTSGG) are compositionally biased toward polar residues. 2 stretches are compositionally biased toward low complexity: residues 1156–1169 (VPSPVSTSSPIHSV) and 1208–1220 (SAHSSYQTSSPSS). Composition is skewed to polar residues over residues 1344 to 1355 (LSRQSSASGYQP), 1370 to 1380 (GTSTPHSSSPD), and 1405 to 1420 (ERSNSLPNYATVNGKA). The segment covering 1421–1435 (SSPLSSGMSSPSSGS) has biased composition (low complexity). The SH2 domain occupies 1472 to 1581 (WYKPDISREQ…ALPCKLVIPD (110 aa)). One can recognise a PTB domain in the interval 1607 to 1743 (ACNVLFINSV…SRVMLGSGQK (137 aa)).

The protein belongs to the PTEN phosphatase protein family. As to quaternary structure, binds to actin filaments. Interacts with phosphotyrosine-containing proteins. Tyrosine phosphorylated. In terms of tissue distribution, heart, gizzard, lung and skeletal muscle.

It is found in the cell surface. The protein resides in the cell junction. The protein localises to the focal adhesion. Its subcellular location is the cytoplasm. It localises to the cytoskeleton. May act as a protein phosphatase and/or a lipid phosphatase. Involved in fibrillar adhesion formation. Plays a role in cell polarization and migration. May be involved in cartilage development and in linking signal transduction pathways to the cytoskeleton. This chain is Tensin-1 (TNS1), found in Gallus gallus (Chicken).